The sequence spans 196 residues: MQLKRVAEAKLPTPWGDFLMVGFEELATGHDHVALVYGDISGHTPVLARVHSECLTGDALFSLRCDCGFQLEAALTQIAEEGRGILLYHRQEGRNIGLLNKIRAYALQDQGYDTVEANHQLGFAADERDFTLCADMFKLLGVNEVRLLTNNPKKVEILTEAGINIVERVPLIVGRNPNNEHYLDTKAEKMGHLLNK.

GTP is bound at residue 49-53 (RVHSE). Residues Cys-54, Cys-65, and Cys-67 each coordinate Zn(2+). GTP contacts are provided by residues Gln-70, 92–94 (EGR), and Thr-114. The active-site Proton acceptor is Asp-126. The active-site Nucleophile is the Arg-128. The GTP site is built by Thr-149 and Lys-154.

This sequence belongs to the GTP cyclohydrolase II family. As to quaternary structure, homodimer. It depends on Zn(2+) as a cofactor.

It catalyses the reaction GTP + 4 H2O = 2,5-diamino-6-hydroxy-4-(5-phosphoribosylamino)-pyrimidine + formate + 2 phosphate + 3 H(+). Its pathway is cofactor biosynthesis; riboflavin biosynthesis; 5-amino-6-(D-ribitylamino)uracil from GTP: step 1/4. Functionally, catalyzes the conversion of GTP to 2,5-diamino-6-ribosylamino-4(3H)-pyrimidinone 5'-phosphate (DARP), formate and pyrophosphate. This chain is GTP cyclohydrolase-2, found in Escherichia coli O127:H6 (strain E2348/69 / EPEC).